The chain runs to 280 residues: 3-phenylpropionate-dihydrodiol/cinnamic acid-dihydrodiol dehydrogenase (280 aa).

Ser143 is a binding site for substrate. Tyr156 (proton acceptor) is an active-site residue.

This sequence belongs to the short-chain dehydrogenases/reductases (SDR) family.

It carries out the reaction 3-(cis-5,6-dihydroxycyclohexa-1,3-dien-1-yl)propanoate + NAD(+) = 3-(2,3-dihydroxyphenyl)propanoate + NADH + H(+). It catalyses the reaction (2E)-3-(cis-5,6-dihydroxycyclohexa-1,3-dien-1-yl)prop-2-enoate + NAD(+) = (2E)-3-(2,3-dihydroxyphenyl)prop-2-enoate + NADH + H(+). The protein operates within aromatic compound metabolism; 3-phenylpropanoate degradation. Converts 3-phenylpropionate-dihydrodiol (PP-dihydrodiol) and cinnamic acid-dihydrodiol (CI-dihydrodiol) into 3-(2,3-dihydroxylphenyl)propanoic acid (DHPP) and 2,3-dihydroxicinnamic acid (DHCI), respectively. The protein is 3-phenylpropionate-dihydrodiol/cinnamic acid-dihydrodiol dehydrogenase of Photorhabdus laumondii subsp. laumondii (strain DSM 15139 / CIP 105565 / TT01) (Photorhabdus luminescens subsp. laumondii).